The chain runs to 321 residues: Lipoyl synthase (321 aa).

C68, C73, C79, C94, C98, C101, and S308 together coordinate [4Fe-4S] cluster. In terms of domain architecture, Radical SAM core spans 80 to 297 (FNHGTATFMI…KEEAMAMGFT (218 aa)).

It belongs to the radical SAM superfamily. Lipoyl synthase family. The cofactor is [4Fe-4S] cluster.

The protein resides in the cytoplasm. The enzyme catalyses [[Fe-S] cluster scaffold protein carrying a second [4Fe-4S](2+) cluster] + N(6)-octanoyl-L-lysyl-[protein] + 2 oxidized [2Fe-2S]-[ferredoxin] + 2 S-adenosyl-L-methionine + 4 H(+) = [[Fe-S] cluster scaffold protein] + N(6)-[(R)-dihydrolipoyl]-L-lysyl-[protein] + 4 Fe(3+) + 2 hydrogen sulfide + 2 5'-deoxyadenosine + 2 L-methionine + 2 reduced [2Fe-2S]-[ferredoxin]. It functions in the pathway protein modification; protein lipoylation via endogenous pathway; protein N(6)-(lipoyl)lysine from octanoyl-[acyl-carrier-protein]: step 2/2. In terms of biological role, catalyzes the radical-mediated insertion of two sulfur atoms into the C-6 and C-8 positions of the octanoyl moiety bound to the lipoyl domains of lipoate-dependent enzymes, thereby converting the octanoylated domains into lipoylated derivatives. In Serratia proteamaculans (strain 568), this protein is Lipoyl synthase.